We begin with the raw amino-acid sequence, 85 residues long: Small ribosomal subunit protein uS17 (85 aa).

Belongs to the universal ribosomal protein uS17 family. As to quaternary structure, part of the 30S ribosomal subunit.

In terms of biological role, one of the primary rRNA binding proteins, it binds specifically to the 5'-end of 16S ribosomal RNA. The chain is Small ribosomal subunit protein uS17 from Anaeromyxobacter dehalogenans (strain 2CP-1 / ATCC BAA-258).